We begin with the raw amino-acid sequence, 336 residues long: tRNA-cytidine(32) 2-sulfurtransferase (336 aa).

Over residues 11-23 (TAAAPAGTGEATP) the composition is skewed to low complexity. Residues 11–31 (TAAAPAGTGEATPVHARARSP) form a disordered region. A PP-loop motif motif is present at residues 75 to 80 (SGGKDS). [4Fe-4S] cluster-binding residues include C150, C153, and C241.

The protein belongs to the TtcA family. Homodimer. Mg(2+) is required as a cofactor. Requires [4Fe-4S] cluster as cofactor.

The protein localises to the cytoplasm. The enzyme catalyses cytidine(32) in tRNA + S-sulfanyl-L-cysteinyl-[cysteine desulfurase] + AH2 + ATP = 2-thiocytidine(32) in tRNA + L-cysteinyl-[cysteine desulfurase] + A + AMP + diphosphate + H(+). Its pathway is tRNA modification. Functionally, catalyzes the ATP-dependent 2-thiolation of cytidine in position 32 of tRNA, to form 2-thiocytidine (s(2)C32). The sulfur atoms are provided by the cysteine/cysteine desulfurase (IscS) system. The polypeptide is tRNA-cytidine(32) 2-sulfurtransferase (Paraburkholderia xenovorans (strain LB400)).